We begin with the raw amino-acid sequence, 101 residues long: MDQYVSTAPPRFPIAQLGTFKQDSAGMGRIFKGNLLQKKALTTFENEHHIRFFTLLVLFHVMVLLRNHSRIQGVSEDWKRANSIFRNFLRLKSSRNTAEAE.

The helical transmembrane segment at 49-65 threads the bilayer; that stretch reads HIRFFTLLVLFHVMVLL.

Its subcellular location is the membrane. In Homo sapiens (Human), this protein is Small integral membrane protein 21 (SMIM21).